Reading from the N-terminus, the 250-residue chain is MMKILLSNDDGVHAPGILALYQALKEVADVRVIAPDRNCSGASNSLTLHNPLRVRRLDNGFYSVNGTPTDCVHLGTNSPMAEDVDLVVSGINDSPNMGDDVLYSGTVAAAMEGRFMGLPAIAVSMGGRGHDYYDTAGRVVAEIVANMENDPLRLDTVLNINVPYTTYDKLKGTRVTKLGRRHRAETMVHDRDPFGSEIFWYGPIGHHASDEPNTDFTAIHEGYISITPLSLDMTAQRHTDTLTDWLEQQK.

A divalent metal cation is bound by residues Asp9, Asp10, Ser40, and Asn92.

The protein belongs to the SurE nucleotidase family. Requires a divalent metal cation as cofactor.

The protein localises to the cytoplasm. It catalyses the reaction a ribonucleoside 5'-phosphate + H2O = a ribonucleoside + phosphate. Its function is as follows. Nucleotidase that shows phosphatase activity on nucleoside 5'-monophosphates. The protein is 5'-nucleotidase SurE of Idiomarina loihiensis (strain ATCC BAA-735 / DSM 15497 / L2-TR).